We begin with the raw amino-acid sequence, 304 residues long: Small glutamine-rich tetratricopeptide repeat-containing protein beta (304 aa).

TPR repeat units lie at residues 15-49 (LREQSQMDAYTSDEQESLEVAIQCLETVFKISPED), 85-118 (ADQLKDEGNNHMKEENYAAAVDCYTQAIELDPNN), 120-152 (VYYCNRAAAQSKLSHYTDAIKDCEKAIAIDSKY), and 153-186 (SKAYGRMGLALTAMNKFEEAVTSYQKALDLDPEN). Lys-131 carries the post-translational modification N6-acetyllysine. 3 positions are modified to phosphoserine: Ser-293, Ser-295, and Ser-297.

The protein belongs to the SGT family. As to quaternary structure, homooligomerize.

Co-chaperone that binds directly to HSC70 and HSP70 and regulates their ATPase activity. In Mus musculus (Mouse), this protein is Small glutamine-rich tetratricopeptide repeat-containing protein beta (Sgtb).